A 160-amino-acid chain; its full sequence is Cytochrome c-type biogenesis protein CcmE (160 aa).

Residues 1-7 (MTRKQRR) are Cytoplasmic-facing. The helical; Signal-anchor for type II membrane protein transmembrane segment at 8–28 (LFMIFGALGTLGVAVGLILFA) threads the bilayer. The Periplasmic portion of the chain corresponds to 29–160 (LSDNIVFFYG…TQGAAAPLIR (132 aa)). His-122 and Tyr-126 together coordinate heme. A disordered region spans residues 140–160 (VWQEDGQAKPATQGAAAPLIR).

It belongs to the CcmE/CycJ family.

It is found in the cell inner membrane. Its function is as follows. Heme chaperone required for the biogenesis of c-type cytochromes. Transiently binds heme delivered by CcmC and transfers the heme to apo-cytochromes in a process facilitated by CcmF and CcmH. The protein is Cytochrome c-type biogenesis protein CcmE of Beijerinckia indica subsp. indica (strain ATCC 9039 / DSM 1715 / NCIMB 8712).